Reading from the N-terminus, the 216-residue chain is Transmembrane emp24 domain-containing protein eca (216 aa).

A signal peptide spans 1–20 (MRDQILSLALLLCVLHSACG). Topologically, residues 21–182 (LYFHISETER…FRHTSESTNS (162 aa)) are lumenal. The 97-residue stretch at 30–126 (RKCFIEEVPD…QLRVHLDIQV (97 aa)) folds into the GOLD domain. A coiled-coil region spans residues 134–164 (ANVAQKEKLTELQLRIRQLLDQVEQITKEQN). The helical transmembrane segment at 183–203 (RVLWWSLAQTVVLVCMGFWQM) threads the bilayer. Topologically, residues 204 to 216 (RHLKSFFEAKKLV) are cytoplasmic. A Prevents secretion from ER motif is present at residues 213 to 216 (KKLV).

This sequence belongs to the EMP24/GP25L family.

It is found in the endoplasmic reticulum membrane. In terms of biological role, eca and bai are essential, though not redundant, for dorsoventral patterning of the embryo. Specifically required during early embryogenesis for the activity of maternal tkv, while the zygotic tkv is not affected. Involved in Golgi organization. The polypeptide is Transmembrane emp24 domain-containing protein eca (Drosophila ananassae (Fruit fly)).